A 145-amino-acid chain; its full sequence is Acidic phospholipase A2 S1-11 (145 aa).

Residues 1–19 form the signal peptide; it reads MYPAHLLVLLAVCVSLLGA. Residues 20-27 constitute a propeptide that is removed on maturation; the sequence is SDMPPQPL. 5 cysteine pairs are disulfide-bonded: C38/C99, C54/C144, C56/C72, C71/C127, and C106/C118. Ca(2+) contacts are provided by Y55, G57, and G59. The active site involves H75. Residue D76 coordinates Ca(2+). D121 is a catalytic residue.

It belongs to the phospholipase A2 family. Group I subfamily. D49 sub-subfamily. Requires Ca(2+) as cofactor. Post-translationally, this enzyme lacks two of the seven disulfide bonds found in similar PLA2 proteins. As to expression, expressed by the venom gland.

Its subcellular location is the secreted. It catalyses the reaction a 1,2-diacyl-sn-glycero-3-phosphocholine + H2O = a 1-acyl-sn-glycero-3-phosphocholine + a fatty acid + H(+). Snake venom phospholipase A2 (PLA2) that inhibits collagen-induced platelet aggregation. PLA2 catalyzes the calcium-dependent hydrolysis of the 2-acyl groups in 3-sn-phosphoglycerides. The sequence is that of Acidic phospholipase A2 S1-11 from Austrelaps superbus (Lowland copperhead snake).